The following is a 40-amino-acid chain: Protamine-2 (40 aa).

The disordered stretch occupies residues 1–40 (MPPRRKRVSSAPRRRRRTYRRTTAHKHQERPVHRRRRRRH).

Testis.

The protein localises to the nucleus. Its subcellular location is the chromosome. Its function is as follows. Protamines substitute for histones in the chromatin of sperm during the haploid phase of spermatogenesis. They compact sperm DNA into a highly condensed, stable and inactive complex. This Bufo japonicus (Japanese common toad) protein is Protamine-2 (PBP2).